The primary structure comprises 469 residues: Ribosomal protein uS12 methylthiotransferase RimO (469 aa).

Positions 1–115 (MKFHIITLGC…IGSVVAGGVA (115 aa)) constitute an MTTase N-terminal domain. The [4Fe-4S] cluster site is built by Cys10, Cys46, Cys78, Cys180, Cys184, and Cys187. A Radical SAM core domain is found at 166-398 (NKRGPSAYLK…MAVQQVISRA (233 aa)). In terms of domain architecture, TRAM spans 401–469 (ARFVGQTMKV…TDYDLWGEIV (69 aa)).

This sequence belongs to the methylthiotransferase family. RimO subfamily. The cofactor is [4Fe-4S] cluster.

The protein localises to the cytoplasm. The enzyme catalyses L-aspartate(89)-[ribosomal protein uS12]-hydrogen + (sulfur carrier)-SH + AH2 + 2 S-adenosyl-L-methionine = 3-methylsulfanyl-L-aspartate(89)-[ribosomal protein uS12]-hydrogen + (sulfur carrier)-H + 5'-deoxyadenosine + L-methionine + A + S-adenosyl-L-homocysteine + 2 H(+). Catalyzes the methylthiolation of an aspartic acid residue of ribosomal protein uS12. The protein is Ribosomal protein uS12 methylthiotransferase RimO of Herpetosiphon aurantiacus (strain ATCC 23779 / DSM 785 / 114-95).